A 561-amino-acid polypeptide reads, in one-letter code: MSPALAAGLQIAFVLAVLAIAYVPVGDYMARVYSSTRDLRVESVIYRVGRIDSRAEQTWYGYAASVLGFSLASALFLYFLQRIQGVLPLSDGLSGVSPAVAFNTAISFVANTNWQSYTPETTMSNFVQPVGLAVQNFVSAAVGMAVAIALVRGFIRVARGGEIGNFWVDLTRGSLRILLPFSFVIALILLSQGVIQSFHSGFASTGLDGNAVTNALAPVASQEAIKELGTNGGGILAANSAHPFENPTPLSNIVEILAILLIPVCLTRTFGTLVGDRRQGLTLLAVMGILWSGLLAVTLAAESGARGVAATAAGSMMEGKEVRFGIPGSALFAVATTGTSTGAVNSAHDSMSPLGGGAVLLNMLLGEIAPGGVGTGLYGILVLALIAVFVGGLLVGRTPEYLGKKLGRREITLAALSILVMPALVLIGTAITVILGSTTGYQGNGGDPGTPGSIHGFSEVLYAFASASNNNGSAFGGLTVTSDWFQSSLGICMLLGRFLPIIFVLALAGALASQKKVAPTAGTLPTSGPMFTGLLTGTVVLVAALTFFPALALGPLAEALQ.

The next 12 helical transmembrane spans lie at 5-25 (LAAG…YVPV), 60-80 (YGYA…LYFL), 86-106 (VLPL…NTAI), 130-150 (VGLA…AIAL), 177-197 (ILLP…VIQS), 247-267 (PTPL…VCLT), 281-301 (LTLL…TLAA), 324-344 (FGIP…TGAV), 376-396 (GLYG…LLVG), 415-435 (ALSI…TVIL), 491-511 (ICML…AGAL), and 533-553 (GLLT…ALAL).

The protein belongs to the KdpA family. In terms of assembly, the system is composed of three essential subunits: KdpA, KdpB and KdpC.

The protein resides in the cell membrane. In terms of biological role, part of the high-affinity ATP-driven potassium transport (or Kdp) system, which catalyzes the hydrolysis of ATP coupled with the electrogenic transport of potassium into the cytoplasm. This subunit binds the extracellular potassium ions and delivers the ions to the membrane domain of KdpB through an intramembrane tunnel. In Rhodococcus erythropolis (strain PR4 / NBRC 100887), this protein is Potassium-transporting ATPase potassium-binding subunit.